The sequence spans 348 residues: DnaJ homolog subfamily B member 5 (348 aa).

In terms of domain architecture, J spans 4–68 (DYYKILGIPS…KKRSLYDQYG (65 aa)).

The sequence is that of DnaJ homolog subfamily B member 5 (Dnajb5) from Mus musculus (Mouse).